The primary structure comprises 443 residues: C4-dicarboxylate transport protein (443 aa).

9 helical membrane-spanning segments follow: residues 17–37 (PFYSHLYVQVLAAIAAGILLG), 57–77 (LVKMVIAPVIFLTVATGIAGM), 92–112 (LYFLTFSTLALVIGMIVANVV), 139–159 (EQSIVGFLTNIIPTTIVGAFA), 161–181 (GDILQVLFFSVLFGIALAMVG), 201–221 (LVGILMKAAPIGAFGAMAFTI), 234–254 (MLIGTFYITSLLFVLVVLGAV), 320–340 (IYMTLAALFIAQATGIQLSWG), and 368–388 (AATLSVVPSVPVAGMALILGI).

The protein belongs to the dicarboxylate/amino acid:cation symporter (DAACS) (TC 2.A.23) family.

Its subcellular location is the cell inner membrane. In terms of biological role, responsible for the transport of dicarboxylates such as succinate, fumarate, and malate from the periplasm across the membrane. This is C4-dicarboxylate transport protein from Rhizobium etli (strain ATCC 51251 / DSM 11541 / JCM 21823 / NBRC 15573 / CFN 42).